Here is a 459-residue protein sequence, read N- to C-terminus: VGFKAGVKEYKLTYYTPDYETKDTDILAAFRVTPQPGVPPEEAGAAVAAESSTGTWTTVWTDGLTSLDRYKGRCYHIEPVPGEESQFIAYVAYPLDLFEEGSVTNLFTSIVGNVFGFKALRALRLEDLRIPPAYVKTFQGPPHGIQVERDKLNKYGRPLLGCTIKPKLGLSAKNYGRAVYECLRGGLDFTKDDENVNSQPFMRWRDRFLFCAEALFKAQAETGEIKGHYLNATAGTCEEMMKRAIFARELGVPIVMHDYLTGGFTANTSLAHYCRDNGLLLHIHRAMHAVIDRQKNHGMHFRVLAKALRMSGGDHIHAGTVVGKLEGEREITLGFVDLLRDDFIEKDRSRGIYFTQDWVSLPGVLPVASGGIHVWHMPALTEIFGDDSVLQFGGGTLGHPWGNAPGAVANRVALEACVQARNEGRDLAREGNEVIREAAKWSPELAAACEVWKEIKFEF.

At K4 the chain carries N6,N6,N6-trimethyllysine. Substrate-binding residues include N113 and T163. Catalysis depends on K165, which acts as the Proton acceptor. K167 lines the substrate pocket. 3 residues coordinate Mg(2+): K191, D193, and E194. K191 carries the N6-carboxylysine modification. H284 serves as the catalytic Proton acceptor. Substrate contacts are provided by R285, H317, and S369.

It belongs to the RuBisCO large chain family. Type I subfamily. As to quaternary structure, heterohexadecamer of 8 large chains and 8 small chains; disulfide-linked. The disulfide link is formed within the large subunit homodimers. It depends on Mg(2+) as a cofactor. In terms of processing, the disulfide bond which can form in the large chain dimeric partners within the hexadecamer appears to be associated with oxidative stress and protein turnover.

Its subcellular location is the plastid. The protein localises to the chloroplast. The enzyme catalyses 2 (2R)-3-phosphoglycerate + 2 H(+) = D-ribulose 1,5-bisphosphate + CO2 + H2O. It carries out the reaction D-ribulose 1,5-bisphosphate + O2 = 2-phosphoglycolate + (2R)-3-phosphoglycerate + 2 H(+). In terms of biological role, ruBisCO catalyzes two reactions: the carboxylation of D-ribulose 1,5-bisphosphate, the primary event in carbon dioxide fixation, as well as the oxidative fragmentation of the pentose substrate in the photorespiration process. Both reactions occur simultaneously and in competition at the same active site. In Geum quellyon (Chilean avens), this protein is Ribulose bisphosphate carboxylase large chain.